The chain runs to 447 residues: Phosphoglucosamine mutase (447 aa).

Catalysis depends on Ser100, which acts as the Phosphoserine intermediate. Mg(2+) contacts are provided by Ser100, Asp239, Asp241, and Asp243. Phosphoserine is present on Ser100.

It belongs to the phosphohexose mutase family. It depends on Mg(2+) as a cofactor. Post-translationally, activated by phosphorylation.

The catalysed reaction is alpha-D-glucosamine 1-phosphate = D-glucosamine 6-phosphate. In terms of biological role, catalyzes the conversion of glucosamine-6-phosphate to glucosamine-1-phosphate. The protein is Phosphoglucosamine mutase of Dictyoglomus turgidum (strain DSM 6724 / Z-1310).